Here is an 80-residue protein sequence, read N- to C-terminus: Small ribosomal subunit protein bS18 (80 aa).

This sequence belongs to the bacterial ribosomal protein bS18 family. As to quaternary structure, part of the 30S ribosomal subunit. Forms a tight heterodimer with protein bS6.

Functionally, binds as a heterodimer with protein bS6 to the central domain of the 16S rRNA, where it helps stabilize the platform of the 30S subunit. This is Small ribosomal subunit protein bS18 from Methylocella silvestris (strain DSM 15510 / CIP 108128 / LMG 27833 / NCIMB 13906 / BL2).